Reading from the N-terminus, the 155-residue chain is uncharacterized protein (155 aa).

The span at 28 to 38 (KKGKDRPREDG) shows a compositional bias: basic and acidic residues. The tract at residues 28-52 (KKGKDRPREDGTQQQPSESKGEAAC) is disordered.

This is an uncharacterized protein from Dryophytes versicolor (chameleon treefrog).